The following is a 96-amino-acid chain: UPF0213 protein BCE33L0031 (96 aa).

In terms of domain architecture, GIY-YIG spans 4–79 (NKHCFYVVEC…KQLNRKQKEE (76 aa)).

Belongs to the UPF0213 family.

This chain is UPF0213 protein BCE33L0031, found in Bacillus cereus (strain ZK / E33L).